A 224-amino-acid polypeptide reads, in one-letter code: tRNA (guanine-N(7)-)-methyltransferase (224 aa).

Positions 54, 79, 106, and 129 each coordinate S-adenosyl-L-methionine. Asp-129 is an active-site residue. Lys-133 and Asp-165 together coordinate substrate.

It belongs to the class I-like SAM-binding methyltransferase superfamily. TrmB family.

The enzyme catalyses guanosine(46) in tRNA + S-adenosyl-L-methionine = N(7)-methylguanosine(46) in tRNA + S-adenosyl-L-homocysteine. It participates in tRNA modification; N(7)-methylguanine-tRNA biosynthesis. Catalyzes the formation of N(7)-methylguanine at position 46 (m7G46) in tRNA. This chain is tRNA (guanine-N(7)-)-methyltransferase, found in Chlamydia caviae (strain ATCC VR-813 / DSM 19441 / 03DC25 / GPIC) (Chlamydophila caviae).